The primary structure comprises 72 residues: Hypotensin (72 aa).

Residues 1-24 form the signal peptide; it reads MKMMIAVFVSILLLMFSLSSTAMG. Propeptides lie at residues 25–35 and 61–72; these read METEQQNMEER and RFDPATFGENED.

The protein belongs to the non-disulfide-bridged peptide (NDBP) superfamily. Expressed by the venom gland.

The protein resides in the secreted. Functionally, potentiates the hypotensive action of bradykinin (BK) in normotensive rats, and induces a vasorelaxant effect in mesenteric artery rings that is induced by endothelium-dependent release of nitric oxide (NO). Does not inhibit angiotensin converting enzyme (ACE). Shows neither hemolytic activity nor cytotoxicity to normal and cancer cells. Shows moderate antimicrobial activity against the fungi Candida albicans and the filamentous fungus Trichophyton rubrum, as well as against the bacteria C.albicans (MIC=128 ug/mL), C.tropicalis (MIC=128 ug/mL) and Aspergillus flavus (MIC=128 ug/mL). Has no antimicrobial activity against S.aureus, S.epidermidis and P.aeruginosa. In Tityus stigmurus (Brazilian scorpion), this protein is Hypotensin.